Reading from the N-terminus, the 590-residue chain is Myo-inositol transporter 3 (590 aa).

Over residues 1-26 (MRTTHIEDRDNNSLENKHTDHIEGVE) the composition is skewed to basic and acidic residues. The interval 1–40 (MRTTHIEDRDNNSLENKHTDHIEGVENGKGTQEPPSPSGF) is disordered. At 1–57 (MRTTHIEDRDNNSLENKHTDHIEGVENGKGTQEPPSPSGFGGHLIDENLVHVEGEDK) the chain is on the cytoplasmic side. A helical transmembrane segment spans residues 58-78 (VTWYLCFLISASAIAGFLFGY). At 79 to 105 (DTGVVGVALPLVGTDLGGNELNSSQQE) the chain is on the extracellular side. Residue Asn-100 is glycosylated (N-linked (GlcNAc...) asparagine). Residues 106-126 (IITAGTTIGAIFGSAILGGWG) form a helical membrane-spanning segment. Residues 127–132 (DHLGRK) lie on the Cytoplasmic side of the membrane. A helical membrane pass occupies residues 133-153 (MAILISDVFFTVGAVIIASSY). Residues 154–157 (SVPQ) lie on the Extracellular side of the membrane. A helical transmembrane segment spans residues 158-178 (IIVGRIVLGVGVGGAAVIAPL). At 179-192 (FITETAPTAVRGRC) the chain is on the cytoplasmic side. A helical membrane pass occupies residues 193–213 (IGVNAFFIPFGQLVADSIGAG). The Extracellular segment spans residues 214-222 (VQNMHGGWR). A helical transmembrane segment spans residues 223-243 (LLFALGAVPSLIQLLLFHYLP). The Cytoplasmic portion of the chain corresponds to 244–325 (ESPRILIVKG…AVSVLQAAGQ (82 aa)). A helical transmembrane segment spans residues 326 to 346 (LCGFNTLLYYAGTLFGLLGLS). Topologically, residues 347–349 (NPA) are extracellular. The chain crosses the membrane as a helical span at residues 350-370 (LGGLIPAGTNAVFVLIGMSTV). The Cytoplasmic portion of the chain corresponds to 371–376 (DKIGRR). Residues 377 to 397 (GLLLVGVPVLLLGLVWNIIGF) traverse the membrane as a helical segment. Residues 398-420 (YYMCKPTGGFLDTSYSYDTTNVG) are Extracellular-facing. A helical membrane pass occupies residues 421–441 (IVIGGIVFYVAGFGLTYSHLV). Residues 442–455 (WYQAEYLALEVRSM) lie on the Cytoplasmic side of the membrane. The chain crosses the membrane as a helical span at residues 456-476 (GSGVATTVCWIANLVVSVSYL). The Extracellular portion of the chain corresponds to 477–485 (SELETMTPS). The helical transmembrane segment at 486-506 (GTYGFYLGLSVIAFVFVVFCF) threads the bilayer. Over 507–590 (PETKQLSIDE…GGKRKPQVLV (84 aa)) the chain is Cytoplasmic.

This sequence belongs to the major facilitator superfamily. Sugar transporter (TC 2.A.1.1) family.

The protein localises to the cell membrane. The catalysed reaction is myo-inositol(out) + H(+)(out) = myo-inositol(in) + H(+)(in). Functionally, transporter for myo-inositol. This chain is Myo-inositol transporter 3, found in Cryptococcus neoformans var. grubii serotype A (strain H99 / ATCC 208821 / CBS 10515 / FGSC 9487) (Filobasidiella neoformans var. grubii).